Reading from the N-terminus, the 307-residue chain is Nucleotide-binding protein Sca_0414 (307 aa).

19 to 26 (GMSGAGKS) is an ATP binding site. 70-73 (DLRG) lines the GTP pocket.

The protein belongs to the RapZ-like family.

Displays ATPase and GTPase activities. In Staphylococcus carnosus (strain TM300), this protein is Nucleotide-binding protein Sca_0414.